A 640-amino-acid chain; its full sequence is Guanylate-binding protein 4 (640 aa).

Residues 1 to 325 (MGERTLHAAV…DAINSGAVPC (325 aa)) form a GTPase domain (Globular) region. A GB1/RHD3-type G domain is found at 50–292 (SQPVVVVAIV…FCSYIFTHAK (243 aa)). GTP-binding positions include 60–67 (GLYRTGKS), 82–84 (LGS), and 112–116 (DTEGL). Residues 499 to 612 (GEKAIAAERA…EQLRLLKILD (114 aa)) are a coiled coil.

This sequence belongs to the TRAFAC class dynamin-like GTPase superfamily. GB1/RHD3 GTPase family. GB1 subfamily. Heterodimer with other family members, including GBP1, GBP2 and GBP5. Dimerization regulates subcellular location. Interacts with IRF7; preventing interaction between TRAF6 and IRF7, resulting in impaired TRAF6-mediated IRF7 ubiquitination. (Microbial infection) Ubiquitinated by S.flexneri IpaH9.8, leading to its degradation by the proteasome, thereby preventing its ability to promote host defense against bacterial infection.

The protein localises to the golgi apparatus membrane. It is found in the cytoplasm. It localises to the nucleus. The protein resides in the perinuclear region. It catalyses the reaction GTP + H2O = GDP + phosphate + H(+). Interferon (IFN)-inducible GTPase that plays important roles in innate immunity against a diverse range of bacterial, viral and protozoan pathogens. Negatively regulates the antiviral response by inhibiting activation of IRF7 transcription factor. In Homo sapiens (Human), this protein is Guanylate-binding protein 4.